The primary structure comprises 254 residues: Probable pectate lyase E (254 aa).

The signal sequence occupies residues 1 to 17 (MYQPLLLLPLLLTSAFA). Asparagine 175 carries N-linked (GlcNAc...) asparagine glycosylation. The tract at residues 228–254 (DNNKKEPAKKSSGPSNACKYKEPLASC) is disordered.

Belongs to the polysaccharide lyase 3 family. Ca(2+) is required as a cofactor.

Its subcellular location is the secreted. It carries out the reaction Eliminative cleavage of (1-&gt;4)-alpha-D-galacturonan to give oligosaccharides with 4-deoxy-alpha-D-galact-4-enuronosyl groups at their non-reducing ends.. Pectinolytic enzyme consist of four classes of enzymes: pectin lyase, polygalacturonase, pectin methylesterase and rhamnogalacturonase. Among pectinolytic enzymes, pectin lyase is the most important in depolymerization of pectin, since it cleaves internal glycosidic bonds of highly methylated pectins. Favors pectate, the anion, over pectin, the methyl ester. The chain is Probable pectate lyase E (plyE) from Aspergillus fumigatus (strain ATCC MYA-4609 / CBS 101355 / FGSC A1100 / Af293) (Neosartorya fumigata).